A 161-amino-acid polypeptide reads, in one-letter code: MTELKIKTEKVVKQLTKESLKPVLKVPKAKIDNASQFYATGKRKNAIARVWLKVGKGKIVVNNKILNQYFPSETYIKTILQPFLLTKTIDQYDVICTVRGGGISGQKGAILHGISKALDKSAPCFHAILRKGGLLTRDSRVVERKKYGQRKARKKTQFSKR.

It belongs to the universal ribosomal protein uS9 family.

The chain is Small ribosomal subunit protein uS9 from Rickettsia typhi (strain ATCC VR-144 / Wilmington).